The primary structure comprises 213 residues: Putative 3-methyladenine DNA glycosylase (213 aa).

It belongs to the DNA glycosylase MPG family.

The sequence is that of Putative 3-methyladenine DNA glycosylase from Corynebacterium jeikeium (strain K411).